Reading from the N-terminus, the 83-residue chain is Short neurotoxin II (83 aa).

The N-terminal stretch at 1–21 (MKTLLLTLVVVTVVCLDLGYT) is a signal peptide. 4 disulfide bridges follow: C24-C45, C38-C62, C64-C75, and C76-C81.

Belongs to the three-finger toxin family. Short-chain subfamily. Type I alpha-neurotoxin sub-subfamily. As to expression, expressed by the venom gland.

It is found in the secreted. Functionally, binds to muscle nicotinic acetylcholine receptor (nAChR) and inhibit acetylcholine from binding to the receptor, thereby impairing neuromuscular transmission. This is Short neurotoxin II from Laticauda colubrina (Yellow-lipped sea krait).